The sequence spans 208 residues: Outer-membrane lipoprotein carrier protein (208 aa).

A signal peptide spans 1–23 (MKKTVKNLTALLTLALAAPWALA).

The protein belongs to the LolA family. Monomer.

Its subcellular location is the periplasm. Functionally, participates in the translocation of lipoproteins from the inner membrane to the outer membrane. Only forms a complex with a lipoprotein if the residue after the N-terminal Cys is not an aspartate (The Asp acts as a targeting signal to indicate that the lipoprotein should stay in the inner membrane). This is Outer-membrane lipoprotein carrier protein from Actinobacillus succinogenes (strain ATCC 55618 / DSM 22257 / CCUG 43843 / 130Z).